The chain runs to 184 residues: Tumor necrosis factor alpha-induced protein 8-like protein 2 (184 aa).

S3 carries the phosphoserine modification.

The protein belongs to the TNFAIP8 family. TNFAIP8L2 subfamily. In terms of assembly, may interact with CASP8; however, such result is unclear since could not reproduce the interaction with CASP8. Interacts with RAC1. Post-translationally, phosphorylated by TAK1/MAP3K7; this phosphorylation triggers association with BTRC and subsequent ubiquitination and degradation. Ubiquitinated in a BTRC-depdent manner; leading to degradation mediated through the proteasome pathway.

It localises to the cytoplasm. It is found in the nucleus. Its subcellular location is the lysosome. In terms of biological role, acts as a negative regulator of innate and adaptive immunity by maintaining immune homeostasis. Plays a regulatory role in the Toll-like signaling pathway by determining the strength of LPS-induced signaling and gene expression. Inhibits TCR-mediated T-cell activation and negatively regulate T-cell function to prevent hyperresponsiveness. Also inhibits autolysosome formation via negatively modulating MTOR activation by interacting with RAC1 and promoting the disassociation of the RAC1-MTOR complex. Plays an essential role in NK-cell biology by acting as a checkpoint and displaying an expression pattern correlating with NK-cell maturation process and by negatively regulating NK-cell maturation and antitumor immunity. Mechanistically, suppresses IL-15-triggered mTOR activity in NK-cells. This chain is Tumor necrosis factor alpha-induced protein 8-like protein 2 (TNFAIP8L2), found in Bos taurus (Bovine).